The primary structure comprises 509 residues: tRNA-2-methylthio-N(6)-dimethylallyladenosine synthase (509 aa).

Residues 1–15 are compositionally biased toward polar residues; it reads MNEQQRLASQQVNSS. The tract at residues 1–23 is disordered; it reads MNEQQRLASQQVNSSTKKEEKDY. Residues 66–184 enclose the MTTase N-terminal domain; it reads RKFYIRTYGC…LPYILKDAMF (119 aa). Residues Cys75, Cys111, Cys145, Cys221, Cys225, and Cys228 each contribute to the [4Fe-4S] cluster site. The region spanning 207–437 is the Radical SAM core domain; it reads RRGDIKAWVN…NALVNKLAIE (231 aa). Residues 440–503 form the TRAM domain; the sequence is DRYKGQIVEV…TWSLNGELVE (64 aa).

The protein belongs to the methylthiotransferase family. MiaB subfamily. In terms of assembly, monomer. [4Fe-4S] cluster serves as cofactor.

It localises to the cytoplasm. It carries out the reaction N(6)-dimethylallyladenosine(37) in tRNA + (sulfur carrier)-SH + AH2 + 2 S-adenosyl-L-methionine = 2-methylsulfanyl-N(6)-dimethylallyladenosine(37) in tRNA + (sulfur carrier)-H + 5'-deoxyadenosine + L-methionine + A + S-adenosyl-L-homocysteine + 2 H(+). Its function is as follows. Catalyzes the methylthiolation of N6-(dimethylallyl)adenosine (i(6)A), leading to the formation of 2-methylthio-N6-(dimethylallyl)adenosine (ms(2)i(6)A) at position 37 in tRNAs that read codons beginning with uridine. This is tRNA-2-methylthio-N(6)-dimethylallyladenosine synthase from Bacillus anthracis.